The following is a 1113-amino-acid chain: uncharacterized protein (1113 aa).

Residue 313–320 coordinates ATP; it reads GPPGTGKS.

The protein belongs to the DNA2/NAM7 helicase family.

This is an uncharacterized protein from Mycoplasma genitalium (strain ATCC 33530 / DSM 19775 / NCTC 10195 / G37) (Mycoplasmoides genitalium).